A 333-amino-acid chain; its full sequence is Holliday junction branch migration complex subunit RuvB (333 aa).

The interval Met-1–Tyr-182 is large ATPase domain (RuvB-L). ATP is bound by residues Leu-21, Arg-22, Gly-63, Lys-66, Thr-67, Thr-68, Glu-129–Phe-131, Arg-172, Tyr-182, and Arg-219. Thr-67 contacts Mg(2+). Residues Lys-183–His-253 are small ATPAse domain (RuvB-S). Positions Pro-256 to Gly-333 are head domain (RuvB-H). Arg-311 and Arg-316 together coordinate DNA.

This sequence belongs to the RuvB family. Homohexamer. Forms an RuvA(8)-RuvB(12)-Holliday junction (HJ) complex. HJ DNA is sandwiched between 2 RuvA tetramers; dsDNA enters through RuvA and exits via RuvB. An RuvB hexamer assembles on each DNA strand where it exits the tetramer. Each RuvB hexamer is contacted by two RuvA subunits (via domain III) on 2 adjacent RuvB subunits; this complex drives branch migration. In the full resolvosome a probable DNA-RuvA(4)-RuvB(12)-RuvC(2) complex forms which resolves the HJ.

The protein localises to the cytoplasm. It catalyses the reaction ATP + H2O = ADP + phosphate + H(+). Its function is as follows. The RuvA-RuvB-RuvC complex processes Holliday junction (HJ) DNA during genetic recombination and DNA repair, while the RuvA-RuvB complex plays an important role in the rescue of blocked DNA replication forks via replication fork reversal (RFR). RuvA specifically binds to HJ cruciform DNA, conferring on it an open structure. The RuvB hexamer acts as an ATP-dependent pump, pulling dsDNA into and through the RuvAB complex. RuvB forms 2 homohexamers on either side of HJ DNA bound by 1 or 2 RuvA tetramers; 4 subunits per hexamer contact DNA at a time. Coordinated motions by a converter formed by DNA-disengaged RuvB subunits stimulates ATP hydrolysis and nucleotide exchange. Immobilization of the converter enables RuvB to convert the ATP-contained energy into a lever motion, pulling 2 nucleotides of DNA out of the RuvA tetramer per ATP hydrolyzed, thus driving DNA branch migration. The RuvB motors rotate together with the DNA substrate, which together with the progressing nucleotide cycle form the mechanistic basis for DNA recombination by continuous HJ branch migration. Branch migration allows RuvC to scan DNA until it finds its consensus sequence, where it cleaves and resolves cruciform DNA. This is Holliday junction branch migration complex subunit RuvB from Shouchella clausii (strain KSM-K16) (Alkalihalobacillus clausii).